Consider the following 687-residue polypeptide: Bifunctional lysine-specific demethylase and histidyl-hydroxylase NO66 (687 aa).

Residues 1–174 (MSDKNKKVSA…RSCPLPSKKN (174 aa)) are disordered. Residues 23–32 (DVQKGTKNSD) are compositionally biased toward basic and acidic residues. Low complexity-rich tracts occupy residues 33 to 50 (KNGAAKNNNNRNLASKNG) and 58 to 74 (KKNGSYSDGDNGSSSSS). Residues 75 to 96 (GEDEEDDSTDSSDEYESSESGE) show a composition bias toward acidic residues. 2 stretches are compositionally biased toward polar residues: residues 100–116 (LNSHSSQSSPETPANTR) and 136–156 (RTSSTPVGQSTSAARSTQQPK). The region spanning 347-483 (NPSSYLVQLR…NLMEKLMPLV (137 aa)) is the JmjC domain. Fe cation contacts are provided by histidine 387, aspartate 389, and histidine 449.

This sequence belongs to the ROX family. NO66 subfamily. Requires Fe(2+) as cofactor.

The protein localises to the nucleus. It catalyses the reaction N(6),N(6)-dimethyl-L-lysyl(36)-[histone H3] + 2 2-oxoglutarate + 2 O2 = L-lysyl(36)-[histone H3] + 2 formaldehyde + 2 succinate + 2 CO2. In terms of biological role, oxygenase that can act as both a histone lysine demethylase and a ribosomal histidine hydroxylase. Specifically demethylates 'Lys-4' (H3K4me) and 'Lys-36' (H3K36me) of histone H3, thereby playing a central role in histone code. The polypeptide is Bifunctional lysine-specific demethylase and histidyl-hydroxylase NO66 (Drosophila persimilis (Fruit fly)).